The chain runs to 327 residues: 2-methoxy-6-polyprenyl-1,4-benzoquinol methylase, mitochondrial (327 aa).

The N-terminal 42 residues, 1 to 42 (MAAPGSCALWSYCGRGWSRAMRGCQLLGLRSSWPGDLLSARL), are a transit peptide targeting the mitochondrion. S-adenosyl-L-methionine-binding positions include Thr117, Asp171, and 199–200 (DA).

This sequence belongs to the class I-like SAM-binding methyltransferase superfamily. MenG/UbiE family. Component of a multi-subunit COQ enzyme complex, composed of at least COQ3, COQ4, COQ5, COQ6, COQ7 and COQ9. Interacts with PYURF; the interaction is direct, stabilizes COQ5 protein and associates PYURF with COQ enzyme complex. In terms of tissue distribution, widely expressed, with highest levels in liver, lung, placenta and skeletal muscle.

The protein localises to the mitochondrion inner membrane. The enzyme catalyses 2-methoxy-6-(all-trans-decaprenyl)benzene-1,4-diol + S-adenosyl-L-methionine = 5-methoxy-2-methyl-3-(all-trans-decaprenyl)benzene-1,4-diol + S-adenosyl-L-homocysteine + H(+). It functions in the pathway cofactor biosynthesis; ubiquinone biosynthesis. Methyltransferase required for the conversion of 2-decaprenyl-6-methoxy-1,4-benzoquinol (DDMQH2) to 2-decaprenyl-3-methyl-6-methoxy-1,4-benzoquinol (DMQH2). The polypeptide is 2-methoxy-6-polyprenyl-1,4-benzoquinol methylase, mitochondrial (Homo sapiens (Human)).